Consider the following 156-residue polypeptide: Small ribosomal subunit protein uS7 (156 aa).

This sequence belongs to the universal ribosomal protein uS7 family. As to quaternary structure, part of the 30S ribosomal subunit. Contacts proteins S9 and S11.

In terms of biological role, one of the primary rRNA binding proteins, it binds directly to 16S rRNA where it nucleates assembly of the head domain of the 30S subunit. Is located at the subunit interface close to the decoding center, probably blocks exit of the E-site tRNA. In Streptococcus pneumoniae serotype 4 (strain ATCC BAA-334 / TIGR4), this protein is Small ribosomal subunit protein uS7.